A 446-amino-acid polypeptide reads, in one-letter code: Iron-sulfur cluster assembly SufBD family protein PH1385 (446 aa).

Belongs to the iron-sulfur cluster assembly SufBD family.

The polypeptide is Iron-sulfur cluster assembly SufBD family protein PH1385 (Pyrococcus horikoshii (strain ATCC 700860 / DSM 12428 / JCM 9974 / NBRC 100139 / OT-3)).